The primary structure comprises 401 residues: Serine/threonine transporter SstT (401 aa).

Helical transmembrane passes span 17 to 37 (IGIGVVLGVLLGLIAPKITVI), 40 to 60 (FGSLFVGALKAIAPLLVLTLV), 78 to 98 (VICLYLFGTFAAAFIAVGASY), 138 to 158 (ALATANYIGVLTWAAVFGLAF), 179 to 199 (VVGWIIGLAPFGIMGLVFDTI), 212 to 232 (LLLLLLVGSMIFVALVVNPLI), 295 to 315 (MAGAAITINILTMAAVHTLGI), and 336 to 356 (ASGVAGGSLLLIPVACSLFGI).

It belongs to the dicarboxylate/amino acid:cation symporter (DAACS) (TC 2.A.23) family.

It localises to the cell membrane. The enzyme catalyses L-serine(in) + Na(+)(in) = L-serine(out) + Na(+)(out). It catalyses the reaction L-threonine(in) + Na(+)(in) = L-threonine(out) + Na(+)(out). In terms of biological role, involved in the import of serine and threonine into the cell, with the concomitant import of sodium (symport system). This Streptococcus suis (strain 98HAH33) protein is Serine/threonine transporter SstT.